Reading from the N-terminus, the 309-residue chain is Ribosomal RNA small subunit methyltransferase H (309 aa).

Residues 44-46 (GGH), D62, F102, D118, and Q125 each bind S-adenosyl-L-methionine. A disordered region spans residues 289–309 (LEQQRNSRARSAKLRVAARSS).

Belongs to the methyltransferase superfamily. RsmH family.

The protein resides in the cytoplasm. The enzyme catalyses cytidine(1402) in 16S rRNA + S-adenosyl-L-methionine = N(4)-methylcytidine(1402) in 16S rRNA + S-adenosyl-L-homocysteine + H(+). Its function is as follows. Specifically methylates the N4 position of cytidine in position 1402 (C1402) of 16S rRNA. The chain is Ribosomal RNA small subunit methyltransferase H from Synechococcus sp. (strain JA-3-3Ab) (Cyanobacteria bacterium Yellowstone A-Prime).